Here is a 230-residue protein sequence, read N- to C-terminus: Phosphoglycerate mutase-like protein 4 (230 aa).

Residue His21 is the Tele-phosphohistidine intermediate of the active site. The Proton donor/acceptor role is filled by Glu96.

Belongs to the phosphoglycerate mutase family.

Its function is as follows. May play a role in carbohydrates metabolism. This is Phosphoglycerate mutase-like protein 4 from Arabidopsis thaliana (Mouse-ear cress).